Reading from the N-terminus, the 164-residue chain is CB1 cannabinoid receptor-interacting protein 1 (164 aa).

Belongs to the CNRIP family. As to quaternary structure, interacts with the cannabinoid receptor CNR1 (via C-terminus). Does not interact with cannabinoid receptor CNR2. As to expression, highly expressed in brain. Also detected in heart, lung, intestine, kidney, testis, spleen, liver and muscle (at protein level).

In terms of biological role, suppresses cannabinoid receptor CNR1-mediated tonic inhibition of voltage-gated calcium channels. The sequence is that of CB1 cannabinoid receptor-interacting protein 1 (Cnrip1) from Mus musculus (Mouse).